We begin with the raw amino-acid sequence, 795 residues long: Phenylalanine--tRNA ligase beta subunit (795 aa).

A tRNA-binding domain is found at A39–R148. The region spanning P401–N476 is the B5 domain. Mg(2+) contacts are provided by D454, D460, E463, and E464. An FDX-ACB domain is found at S701–R794.

Belongs to the phenylalanyl-tRNA synthetase beta subunit family. Type 1 subfamily. Tetramer of two alpha and two beta subunits. The cofactor is Mg(2+).

The protein localises to the cytoplasm. It carries out the reaction tRNA(Phe) + L-phenylalanine + ATP = L-phenylalanyl-tRNA(Phe) + AMP + diphosphate + H(+). This chain is Phenylalanine--tRNA ligase beta subunit, found in Mannheimia succiniciproducens (strain KCTC 0769BP / MBEL55E).